A 480-amino-acid polypeptide reads, in one-letter code: MAGTRWVLGALLRGCGCNCSSCRRTGAACLPFYSAAGSIPSGVSGRRRLLLLLGAAAAAASQTRGLQTGPVPPGRLAGPPAVATSAAAAAAASYSALRASLLPQSLAAAAAVPTRSYSQESKTTYLEDLPPPPEYELAPSKLEEEVDDVFLIRAQGLPWSCTMEDVLNFFSDCRIRNGENGIHFLLNRDGKRRGDALIEMESEQDVQKALEKHRMYMGQRYVEVYEINNEDVDALMKSLQVKSSPVVNDGVVRLRGLPYSCNEKDIVDFFAGLNIVDITFVMDYRGRRKTGEAYVQFEEPEMANQALLKHREEIGNRYIEIFPSRRNEVRTHVGSYKGKKIASFPTAKYITEPEMVFEEHEVNEDIQPMTAFESEKEIELPKEVPEKLPEAADFGTTSSLHFVHMRGLPFQANAQDIINFFAPLKPVRITMEYSSSGKATGEADVHFETHEDAVAAMLKDRSHVHHRYIELFLNSCPKGK.

Residues 1-117 (MAGTRWVLGA…AAAAVPTRSY (117 aa)) constitute a mitochondrion transit peptide. 2 RRM domains span residues 122 to 246 (KTTY…SSPV) and 250 to 326 (GVVR…PSRR). Residue S244 is modified to Phosphoserine. S335 carries the phosphoserine modification. The 80-residue stretch at 401–480 (HFVHMRGLPF…LFLNSCPKGK (80 aa)) folds into the RRM 3 domain.

In terms of assembly, monomer. Found in a complex with DDX28, DHX30, FASTKD2 and FASTKD5. Interacts with the mitochondrial RNase P complex subunit TRMT10C/MRPP1. Interacts with the 2 components of the mitochondrial degradosome complex, PNPT1 and SUPV3L1, in an RNA-dependent manner.

It localises to the mitochondrion matrix. Its subcellular location is the cytoplasm. Its function is as follows. Regulator of post-transcriptional mitochondrial gene expression, required for assembly of the mitochondrial ribosome and for recruitment of mRNA and lncRNA. Binds RNAs containing the 14 base G-rich element. Preferentially binds RNAs transcribed from three contiguous genes on the light strand of mtDNA, the ND6 mRNA, and the long non-coding RNAs for MT-CYB and MT-ND5, each of which contains multiple consensus binding sequences. Involved in the degradosome-mediated decay of non-coding mitochondrial transcripts (MT-ncRNA) and tRNA-like molecules. Acts by unwinding G-quadruplex RNA structures in MT-ncRNA, thus facilitating their degradation by the degradosome. G-quadruplexes (G4) are non-canonical 4 stranded structures formed by transcripts from the light strand of mtDNA. The protein is G-rich sequence factor 1 (GRSF1) of Homo sapiens (Human).